The chain runs to 451 residues: Glycylpeptide N-tetradecanoyltransferase (451 aa).

Residues 34-37 (YKFW), 167-169 (LCV), and 175-179 (SKRLT) contribute to the tetradecanoyl-CoA site. Leu-451 functions as the Proton acceptor; via carboxylate in the catalytic mechanism.

This sequence belongs to the NMT family. In terms of assembly, monomer.

It localises to the cytoplasm. The enzyme catalyses N-terminal glycyl-[protein] + tetradecanoyl-CoA = N-tetradecanoylglycyl-[protein] + CoA + H(+). Functionally, adds a myristoyl group to the N-terminal glycine residue of certain cellular proteins. The chain is Glycylpeptide N-tetradecanoyltransferase (NMT1) from Candida glabrata (strain ATCC 2001 / BCRC 20586 / JCM 3761 / NBRC 0622 / NRRL Y-65 / CBS 138) (Yeast).